The chain runs to 130 residues: Small ribosomal subunit protein uS9 (130 aa).

Belongs to the universal ribosomal protein uS9 family.

The chain is Small ribosomal subunit protein uS9 from Streptococcus gordonii (strain Challis / ATCC 35105 / BCRC 15272 / CH1 / DL1 / V288).